A 163-amino-acid polypeptide reads, in one-letter code: NADH-quinone oxidoreductase subunit I (163 aa).

4Fe-4S ferredoxin-type domains follow at residues 55 to 84 (RRYP…IDAE) and 94 to 123 (TRYD…EGPN). [4Fe-4S] cluster is bound by residues Cys64, Cys67, Cys70, Cys74, Cys103, Cys106, Cys109, and Cys113.

Belongs to the complex I 23 kDa subunit family. As to quaternary structure, NDH-1 is composed of 14 different subunits. Subunits NuoA, H, J, K, L, M, N constitute the membrane sector of the complex. [4Fe-4S] cluster serves as cofactor.

It localises to the cell inner membrane. The catalysed reaction is a quinone + NADH + 5 H(+)(in) = a quinol + NAD(+) + 4 H(+)(out). In terms of biological role, NDH-1 shuttles electrons from NADH, via FMN and iron-sulfur (Fe-S) centers, to quinones in the respiratory chain. The immediate electron acceptor for the enzyme in this species is believed to be ubiquinone. Couples the redox reaction to proton translocation (for every two electrons transferred, four hydrogen ions are translocated across the cytoplasmic membrane), and thus conserves the redox energy in a proton gradient. In Rhodobacter capsulatus (Rhodopseudomonas capsulata), this protein is NADH-quinone oxidoreductase subunit I (nuoI).